A 393-amino-acid polypeptide reads, in one-letter code: NAD(P)H-quinone oxidoreductase subunit H, chloroplastic (393 aa).

Belongs to the complex I 49 kDa subunit family. As to quaternary structure, NDH is composed of at least 16 different subunits, 5 of which are encoded in the nucleus.

The protein resides in the plastid. The protein localises to the chloroplast thylakoid membrane. It carries out the reaction a plastoquinone + NADH + (n+1) H(+)(in) = a plastoquinol + NAD(+) + n H(+)(out). It catalyses the reaction a plastoquinone + NADPH + (n+1) H(+)(in) = a plastoquinol + NADP(+) + n H(+)(out). In terms of biological role, NDH shuttles electrons from NAD(P)H:plastoquinone, via FMN and iron-sulfur (Fe-S) centers, to quinones in the photosynthetic chain and possibly in a chloroplast respiratory chain. The immediate electron acceptor for the enzyme in this species is believed to be plastoquinone. Couples the redox reaction to proton translocation, and thus conserves the redox energy in a proton gradient. The protein is NAD(P)H-quinone oxidoreductase subunit H, chloroplastic of Eucalyptus globulus subsp. globulus (Tasmanian blue gum).